The primary structure comprises 304 residues: UDP-N-acetylenolpyruvoylglucosamine reductase (304 aa).

An FAD-binding PCMH-type domain is found at 31–196 (KVGGPADYLA…ISAKFNLKPG (166 aa)). Arg-175 is a catalytic residue. Ser-225 (proton donor) is an active-site residue. Residue Glu-295 is part of the active site.

The protein belongs to the MurB family. The cofactor is FAD.

It is found in the cytoplasm. The enzyme catalyses UDP-N-acetyl-alpha-D-muramate + NADP(+) = UDP-N-acetyl-3-O-(1-carboxyvinyl)-alpha-D-glucosamine + NADPH + H(+). It functions in the pathway cell wall biogenesis; peptidoglycan biosynthesis. Its function is as follows. Cell wall formation. This chain is UDP-N-acetylenolpyruvoylglucosamine reductase, found in Streptococcus thermophilus (strain CNRZ 1066).